The chain runs to 264 residues: Hydroxyethylthiazole kinase (264 aa).

Met41 lines the substrate pocket. ATP is bound by residues Lys117 and Ser163. Gly190 lines the substrate pocket.

Belongs to the Thz kinase family. Mg(2+) is required as a cofactor.

The enzyme catalyses 5-(2-hydroxyethyl)-4-methylthiazole + ATP = 4-methyl-5-(2-phosphooxyethyl)-thiazole + ADP + H(+). It participates in cofactor biosynthesis; thiamine diphosphate biosynthesis; 4-methyl-5-(2-phosphoethyl)-thiazole from 5-(2-hydroxyethyl)-4-methylthiazole: step 1/1. Catalyzes the phosphorylation of the hydroxyl group of 4-methyl-5-beta-hydroxyethylthiazole (THZ). The sequence is that of Hydroxyethylthiazole kinase from Thermoanaerobacter pseudethanolicus (strain ATCC 33223 / 39E) (Clostridium thermohydrosulfuricum).